Reading from the N-terminus, the 132-residue chain is Small ribosomal subunit protein uS8 (132 aa).

It belongs to the universal ribosomal protein uS8 family. As to quaternary structure, part of the 30S ribosomal subunit. Contacts proteins S5 and S12.

In terms of biological role, one of the primary rRNA binding proteins, it binds directly to 16S rRNA central domain where it helps coordinate assembly of the platform of the 30S subunit. The polypeptide is Small ribosomal subunit protein uS8 (Leuconostoc citreum (strain KM20)).